A 159-amino-acid chain; its full sequence is Phosphopantetheine adenylyltransferase (159 aa).

Position 10 (T10) interacts with substrate. ATP is bound by residues 10 to 11 (TF) and H18. Substrate contacts are provided by K42, M74, and R88. ATP contacts are provided by residues 89–91 (GLR), E99, and 124–130 (WSFISSS).

It belongs to the bacterial CoaD family. In terms of assembly, homohexamer. Requires Mg(2+) as cofactor.

Its subcellular location is the cytoplasm. The catalysed reaction is (R)-4'-phosphopantetheine + ATP + H(+) = 3'-dephospho-CoA + diphosphate. The protein operates within cofactor biosynthesis; coenzyme A biosynthesis; CoA from (R)-pantothenate: step 4/5. Functionally, reversibly transfers an adenylyl group from ATP to 4'-phosphopantetheine, yielding dephospho-CoA (dPCoA) and pyrophosphate. This Salmonella arizonae (strain ATCC BAA-731 / CDC346-86 / RSK2980) protein is Phosphopantetheine adenylyltransferase.